The chain runs to 559 residues: Estrogen receptor beta (559 aa).

The interval 1 to 155 (MAVACSPEKD…SSGGKADLHF (155 aa)) is modulating. The interval 128–148 (TSSKSARRRSQENEEGEVSSG) is disordered. 2 NR C4-type zinc fingers span residues 156–176 (CAVCHDYASGYHYGVWSCEGC) and 192–216 (CPATNQCTIDKNRRKSCQACRLHKC). Positions 156–221 (CAVCHDYASG…RLHKCYNVGM (66 aa)) form a DNA-binding region, nuclear receptor. The segment covering 243–254 (RLSSQGRTSGPS) has biased composition (polar residues). Residues 243 to 269 (RLSSQGRTSGPSVLNGPAVGPLNTPQP) are disordered. Residues 273–509 (TSKQLIERIM…DLLLEMLDAH (237 aa)) enclose the NR LBD domain. The tract at residues 514 to 559 (SRLPRRSPQQETVEQCDAPARPHSPGTSGPTNTWTPSCTGGRGEPQ) is disordered. Positions 538–551 (PGTSGPTNTWTPSC) are enriched in polar residues.

Belongs to the nuclear hormone receptor family. NR3 subfamily. In terms of assembly, binds DNA as a homodimer. Can form a heterodimer with ER-alpha.

The protein localises to the nucleus. Binds estrogens with an affinity similar to that of ER-alpha, and activates expression of reporter genes containing estrogen response elements (ERE) in an estrogen-dependent manner. In Sparus aurata (Gilthead sea bream), this protein is Estrogen receptor beta (esr2).